A 425-amino-acid polypeptide reads, in one-letter code: 2-oxoglutarate and iron-dependent oxygenase JMJD4 homolog (425 aa).

A JmjC domain is found at 165-316 (AAQMPGYNFY…MVWQNLKNNL (152 aa)). Positions 212, 214, and 284 each coordinate Fe cation.

This sequence belongs to the JMJD6 family. It depends on Fe(2+) as a cofactor.

It localises to the nucleus. The protein localises to the cytoplasm. It carries out the reaction L-lysyl-[protein] + 2-oxoglutarate + O2 = 4-hydroxy-L-lysyl-[protein] + succinate + CO2. Its function is as follows. Catalyzes the 2-oxoglutarate and iron-dependent C4-lysyl hydroxylation of eRF1 thereby promoting the translational termination efficiency of eRF1. May be involved in regulation of chromatin structure, promoting expansion of heterochromatin. The protein is 2-oxoglutarate and iron-dependent oxygenase JMJD4 homolog of Drosophila melanogaster (Fruit fly).